We begin with the raw amino-acid sequence, 231 residues long: Non-fluorescent flavoprotein (231 aa).

It belongs to the bacterial luciferase oxidoreductase family. In terms of assembly, homodimer. FMN serves as cofactor.

The sequence is that of Non-fluorescent flavoprotein (luxF) from Photobacterium phosphoreum.